A 1513-amino-acid chain; its full sequence is Mucin-2 (1513 aa).

An N-terminal signal peptide occupies residues M1–G20. The VWFD 1 domain occupies H32–E204. 28 cysteine pairs are disulfide-bonded: C34-C166, C56-C203, C64-C163, C215-C252, C222-C247, C234-C272, C254-C260, C262-C288, C292-C326, C309-C348, C328-C342, C350-C372, C367-C384, C370-C379, C388-C525, C410-C560, C432-C440, C571-C616, C585-C611, C598-C636, C618-C624, C626-C651, C658-C695, C671-C685, C675-C715, C697-C709, C717-C739, and C737-C746. D46 is a Ca(2+) binding site. Cu(+) is bound by residues M143 and M151. E153 is a binding site for Cu(2+). N160 is a glycosylation site (N-linked (GlcNAc...) asparagine). Ca(2+) is bound by residues D168, N170, and E177. 2 residues coordinate Cu(2+): H274 and H321. The TIL domain maps to C292–C348. M323 provides a ligand contact to Cu(+). Positions C350–C410 constitute a VWFC domain. The VWFD 2 domain occupies E386 to H561. Residue D400 participates in Ca(2+) binding. Residue N420 is glycosylated (N-linked (GlcNAc...) asparagine). The Ca(2+) site is built by N527, N529, L531, D534, and D535. A glycan (N-linked (GlcNAc...) asparagine) is linked at N667. An N-linked (GlcNAc...) asparagine glycan is attached at N767. 21 cysteine pairs are disulfide-bonded: C781–C817, C799–C811, C819–C842, C836–C854, C840–C849, C858–C989, C880–C1024, C889–C986, C906–C913, C1034–C1077, C1048–C1072, C1059–C1099, C1079–C1087, C1089–C1114, C1105–C1134, C1118–C1160, C1142–C1184, C1164–C1178, C1186–C1210, C1205–C1235, and C1208–C1218. An N-linked (GlcNAc...) asparagine glycan is attached at N837. Positions S856–P1025 constitute a VWFD 3 domain. D870 is a binding site for Ca(2+). The N-linked (GlcNAc...) asparagine glycan is linked to N892. 4 residues coordinate Ca(2+): N991, D993, N998, and D999. N-linked (GlcNAc...) asparagine glycosylation is found at N1136 and N1151. N-linked (GlcNAc...) asparagine glycans are attached at residues N1212, N1227, and N1243. O-linked (GalNAc) threonine glycosylation is found at T1264, T1267, T1268, and T1280. An O-linked (GalNAc) serine glycan is attached at S1286. O-linked (GalNAc) threonine glycosylation is present at T1290. N1303, H1306, S1309, G1313, D1314, and E1316 together coordinate Ca(2+). N-linked (GlcNAc...) asparagine glycosylation occurs at N1350. The Ca(2+) site is built by D1373 and Y1374. 11 consecutive repeat copies span residues S1392–S1407, S1408–T1423, S1424–V1434, S1435–T1445, S1446–T1456, S1457–P1467, S1468–P1478, S1479–P1489, S1490–T1500, S1501–T1511, and S1512–P1513. The interval S1392–P1513 is approximate repeats. Residues S1392–P1513 form a disordered region.

Homomultimer; disulfide-linked. The N- and C-terminus mediate their assembly into higher order structures to form filaments. The CTCK domains of two polypeptides associate in the endoplasmic reticulum to generate intermolecularly disulfide-bonded dimers. These dimers progress to the Golgi apparatus, which is a more acidic environment than the endoplasmic reticulum. Under acidic conditions, the N-termini form non-covalent intermolecular interactions that juxtapose assemblies of the third VWD domain (VWD3) from different CTCK-linked dimers. The VWD3 assemblies then become disulfide bonded to one another to produce long, disulfide-linked polymers that remain highly compact until secretion. Interacts with FCGBP. Interacts with AGR2; disulfide-linked. In terms of processing, O-glycosylated. O-glycosylation is required for mucin assembly. Goblet cells synthesize two forms of mucin that differ in branched chain O-glycosylation and the site of production in the colon. Post-translationally, may undergo proteolytic cleavage in the outer mucus layer of the colon, contributing to the expanded volume and loose nature of this layer which allows for bacterial colonization in contrast to the inner mucus layer which is dense and devoid of bacteria. At low pH of 6 and under, undergoes autocatalytic cleavage in vitro in the N-terminal region of the fourth VWD domain. It is likely that this also occurs in vivo and is triggered by the low pH of the late secretory pathway. In terms of tissue distribution, expressed in intestine and airway.

The protein resides in the secreted. Coats the epithelia of the intestines and other mucus membrane-containing organs to provide a protective, lubricating barrier against particles and infectious agents at mucosal surfaces. Major constituent of the colon mucus, which is mainly formed by large polymeric networks of MUC2 secreted by goblet cells that cover the exposed surfaces of intestine. MUC2 networks form hydrogels that guard the underlying epithelium from pathogens and other hazardous matter entering from the outside world, while permitting nutrient absorption and gas exchange. Acts as a divalent copper chaperone that protects intestinal cells from copper toxicity and facilitates nutritional copper unptake into cells. Binds both Cu(2+) and its reduced form, Cu(1+), at two juxtaposed binding sites: Cu(2+), once reduced to Cu(1+) by vitamin C (ascorbate) or other dietary antioxidants, transits to the other binding site. MUC2-bound Cu(1+) is protected from oxidation in aerobic environments, and can be released for nutritional delivery to cells. Mucin gels store antimicrobial molecules that participate in innate immunity. Mucin glycoproteins also house and feed the microbiome, lubricate tissue surfaces, and may facilitate the removal of contaminants and waste products from the body. Goblet cells synthesize two forms of MUC2 mucin that differ in branched chain O-glycosylation and the site of production in the colon: a (1) 'thick' mucus that wraps the microbiota to form fecal pellets is produced in the proximal, ascending colon. 'Thick' mucus transits along the descending colon and is lubricated by a (2) 'thin' MUC2 mucus produced in the distal colon which adheres to the 'thick' mucus. The chain is Mucin-2 from Rattus norvegicus (Rat).